The primary structure comprises 170 residues: NAD(P)H-quinone oxidoreductase subunit I, chloroplastic (170 aa).

2 consecutive 4Fe-4S ferredoxin-type domains span residues 55-84 and 95-124; these read GRIH…VDWK and LNYS…MTEE. [4Fe-4S] cluster is bound by residues Cys64, Cys67, Cys70, Cys74, Cys104, Cys107, Cys110, and Cys114.

Belongs to the complex I 23 kDa subunit family. As to quaternary structure, NDH is composed of at least 16 different subunits, 5 of which are encoded in the nucleus. [4Fe-4S] cluster serves as cofactor.

It is found in the plastid. The protein resides in the chloroplast thylakoid membrane. It carries out the reaction a plastoquinone + NADH + (n+1) H(+)(in) = a plastoquinol + NAD(+) + n H(+)(out). The catalysed reaction is a plastoquinone + NADPH + (n+1) H(+)(in) = a plastoquinol + NADP(+) + n H(+)(out). Functionally, NDH shuttles electrons from NAD(P)H:plastoquinone, via FMN and iron-sulfur (Fe-S) centers, to quinones in the photosynthetic chain and possibly in a chloroplast respiratory chain. The immediate electron acceptor for the enzyme in this species is believed to be plastoquinone. Couples the redox reaction to proton translocation, and thus conserves the redox energy in a proton gradient. The protein is NAD(P)H-quinone oxidoreductase subunit I, chloroplastic of Spinacia oleracea (Spinach).